A 170-amino-acid chain; its full sequence is dCTP pyrophosphatase 1 (170 aa).

Residues 1–25 (MSQAGTGVCGNGGQEDSAAAGPFSF) are disordered. S2 is modified (N-acetylserine). Position 2 is a phosphoserine (S2). Residues H38 and 47–51 (WEQFH) each bind substrate. Positions 63 and 66 each coordinate Mg(2+). A substrate-binding site is contributed by W73. E95 and D98 together coordinate Mg(2+). Substrate is bound at residue Y102. A disordered region spans residues 149-170 (LSENEAVGSGDPASELGNQAST).

As to quaternary structure, homotetramer. It depends on Mg(2+) as a cofactor.

It localises to the cytoplasm. It is found in the cytosol. The enzyme catalyses dCTP + H2O = dCMP + diphosphate + H(+). Functionally, hydrolyzes deoxynucleoside triphosphates (dNTPs) to the corresponding nucleoside monophosphates. Has a strong preference for dCTP and its analogs including 5-iodo-dCTP and 5-methyl-dCTP for which it may even have a higher efficiency. May protect DNA or RNA against the incorporation of these genotoxic nucleotide analogs through their catabolism. This chain is dCTP pyrophosphatase 1, found in Rattus norvegicus (Rat).